Consider the following 143-residue polypeptide: uncharacterized protein (143 aa).

One can recognise an HTH marR-type domain in the interval 5-137 (DARLASDLSL…LRSAADLMLA (133 aa)). The H-T-H motif DNA-binding region spans 51-74 (PGALAIRERVRPPSMTRVIASLAD).

As to quaternary structure, homodimer.

This is an uncharacterized protein from Mycobacterium bovis (strain ATCC BAA-935 / AF2122/97).